Reading from the N-terminus, the 713-residue chain is Ribosomal RNA large subunit methyltransferase K/L (713 aa).

The region spanning 46 to 157 (TAYRICLWSR…RDQATLSLDL (112 aa)) is the THUMP domain.

It belongs to the methyltransferase superfamily. RlmKL family.

The protein localises to the cytoplasm. The catalysed reaction is guanosine(2445) in 23S rRNA + S-adenosyl-L-methionine = N(2)-methylguanosine(2445) in 23S rRNA + S-adenosyl-L-homocysteine + H(+). It carries out the reaction guanosine(2069) in 23S rRNA + S-adenosyl-L-methionine = N(2)-methylguanosine(2069) in 23S rRNA + S-adenosyl-L-homocysteine + H(+). In terms of biological role, specifically methylates the guanine in position 2445 (m2G2445) and the guanine in position 2069 (m7G2069) of 23S rRNA. In Syntrophotalea carbinolica (strain DSM 2380 / NBRC 103641 / GraBd1) (Pelobacter carbinolicus), this protein is Ribosomal RNA large subunit methyltransferase K/L.